The chain runs to 506 residues: Maturase K (506 aa).

This sequence belongs to the intron maturase 2 family. MatK subfamily.

It is found in the plastid. It localises to the chloroplast. In terms of biological role, usually encoded in the trnK tRNA gene intron. Probably assists in splicing its own and other chloroplast group II introns. The protein is Maturase K of Gaultheria procumbens (Wintergreen).